A 310-amino-acid polypeptide reads, in one-letter code: Coproporphyrin III ferrochelatase (310 aa).

Residue Tyr-13 participates in Fe-coproporphyrin III binding. Tyr-13 is an N-methylmesoporphyrin binding site. Glu-20 serves as a coordination point for Mg(2+). Fe-coproporphyrin III is bound at residue Arg-30. 31–33 is a binding site for N-methylmesoporphyrin; that stretch reads RGR. Arg-46 is a binding site for Mg(2+). Residues 46 to 47, Ser-54, and Tyr-125 contribute to the Fe-coproporphyrin III site; that span reads RY. 2 residues coordinate N-methylmesoporphyrin: His-183 and Lys-188. His-183 is a Fe(2+) binding site. Residue Glu-264 participates in Fe(2+) binding. Residues Asp-268 and Glu-272 each coordinate Mg(2+).

Belongs to the ferrochelatase family. In terms of assembly, monomer. Interacts with frataxin/Fra.

The protein localises to the cytoplasm. The catalysed reaction is Fe-coproporphyrin III + 2 H(+) = coproporphyrin III + Fe(2+). It functions in the pathway porphyrin-containing compound metabolism; protoheme biosynthesis. Its activity is regulated as follows. Stimulated by Mg(2+). Inhibited by Cd(2+). Inhibited by N-methylmesoporphyrin (N-MeMP) and 2,4-disulfonic acid deuteroporphyrin IX (dSDP). Its function is as follows. Involved in coproporphyrin-dependent heme b biosynthesis. Catalyzes the insertion of ferrous iron into coproporphyrin III to form Fe-coproporphyrin III. It can also insert iron into protoporphyrin IX. Has weaker activity with 2,4 disulfonate, deuteroporphyrin and 2,4 hydroxyethyl. In vitro, can also use Zn(2+) or Cu(2+). The chain is Coproporphyrin III ferrochelatase from Bacillus subtilis (strain 168).